Here is a 390-residue protein sequence, read N- to C-terminus: Phosphoglycerate kinase (390 aa).

Substrate-binding positions include 19-21 (DYN), Arg34, 57-60 (HLGR), Arg115, and Arg148. Residues Lys198, Gly289, Glu320, and 347-350 (GGDS) each bind ATP.

The protein belongs to the phosphoglycerate kinase family. Monomer.

Its subcellular location is the cytoplasm. It carries out the reaction (2R)-3-phosphoglycerate + ATP = (2R)-3-phospho-glyceroyl phosphate + ADP. The protein operates within carbohydrate degradation; glycolysis; pyruvate from D-glyceraldehyde 3-phosphate: step 2/5. The protein is Phosphoglycerate kinase (pgk) of Thermus thermophilus (strain ATCC 27634 / DSM 579 / HB8).